The chain runs to 239 residues: Calcium-activated potassium channel subunit beta-3 (239 aa).

Topologically, residues 1–51 are cytoplasmic; that stretch reads MQPFSIPVQITLQGGRRRQGRTALPASGISNGDPLKVHPKLPSSAGEDRAT. A disordered region spans residues 15 to 38; sequence GRRRQGRTALPASGISNGDPLKVH. Residues 52-72 form a helical membrane-spanning segment; it reads LLGIAMMASSVLMFFLLGTTV. At 73 to 197 the chain is on the extracellular side; that stretch reads LKPFMLSSPR…GVVLRKSGHK (125 aa). N-linked (GlcNAc...) asparagine glycans are attached at residues asparagine 86, asparagine 123, and asparagine 174. The helical transmembrane segment at 198 to 218 threads the bilayer; the sequence is VVFHCLFWPLLTLLGGALIVG. Residues 219–239 lie on the Cytoplasmic side of the membrane; that stretch reads LVRLTQHLSFQCEKYRAVVRA.

Belongs to the KCNMB (TC 8.A.14.1) family. KCNMB3 subfamily. Interacts with KCNMA1 tetramer. There are probably 4 molecules of KCMNB3 per KCNMA1 tetramer. N-glycosylated. Post-translationally, the extracellular domain contains disulfide bond essential for the gating mechanism.

The protein localises to the membrane. Its function is as follows. Regulatory subunit of the calcium activated potassium KCNMA1 (maxiK) channel. Modulates the calcium sensitivity and gating kinetics of KCNMA1, thereby contributing to KCNMA1 channel diversity. Alters the functional properties of the current expressed by the KCNMA1 channel. May partially inactivate the current of KCNBMA. Two or more subunits of KCNMB3 are required to block the KCNMA1 tetramer. This Rattus norvegicus (Rat) protein is Calcium-activated potassium channel subunit beta-3.